We begin with the raw amino-acid sequence, 1615 residues long: Ras-responsive element-binding protein 1 (1615 aa).

The interval 1–44 (MMSAVMNVGKIAENGGTSQTVKSPSKSPAPNRIGRRNQETKEEK) is disordered. Polar residues predominate over residues 15–28 (GGTSQTVKSPSKSP). 3 C2H2-type zinc fingers span residues 47–69 (YTCP…IRQH), 78–100 (HSCS…MLVH), and 106–128 (YKCS…MKIH). Residues 127-169 (IHEKDPNSTASTTPPSPLKAKRLSSKRKFSQDAEMDREERTPA) form a disordered region. The segment covering 145–154 (KAKRLSSKRK) has biased composition (basic residues). C2H2-type zinc fingers lie at residues 189 to 211 (YHCP…METH), 216 to 239 (LRCD…AVIH), and 297 to 319 (FICE…TETH). A disordered region spans residues 511–556 (SAQQASPGCISPSLPPPPLRLIKNSVETSSNSHLSQPGAKSSPSSQ). Residues 535–549 (SVETSSNSHLSQPGA) are compositionally biased toward polar residues. 4 C2H2-type zinc fingers span residues 622 to 644 (YPCR…IRSH), 650 to 672 (YQCN…LRTH), 732 to 754 (TVCK…MRTH), and 763 to 788 (FECK…QHLH). 3 disordered regions span residues 1025–1044 (AADA…KSGN), 1058–1104 (DSNL…VDLE), and 1123–1162 (KFSP…KRNT). Residues 1026–1036 (ADASPKAASSS) are compositionally biased toward low complexity. Positions 1082-1095 (TKKRGRKKGTKNKP) are enriched in basic residues. The span at 1123–1132 (KFSPFLQSTD) shows a compositional bias: polar residues. The segment at 1170–1192 (ITCPYCPRVFSWASSLQRHMLTH) adopts a C2H2-type 11 zinc-finger fold. Disordered stretches follow at residues 1214 to 1269 (CEKE…KSLD) and 1313 to 1418 (LSRH…DKRK). A compositionally biased stretch (acidic residues) spans 1242–1262 (PAEEDAEEKADEYEEGPEEDS). The C2H2-type 12 zinc-finger motif lies at 1298-1320 (HACDVCGKTFKFAGALSRHKKAH). Basic and acidic residues-rich tracts occupy residues 1321–1339 (IRED…KSIQ) and 1388–1414 (GTER…TAKA). 2 consecutive C2H2-type zinc fingers follow at residues 1419–1441 (KVCT…MRSH) and 1447–1469 (YKCQ…QRIH). A compositionally biased stretch (basic residues) spans 1464–1477 (RHQRIHQKVKNTRN). The interval 1464-1585 (RHQRIHQKVK…SELERPSGFI (122 aa)) is disordered. Basic and acidic residues-rich tracts occupy residues 1478-1493 (HGKE…RCGE) and 1566-1580 (PAKD…ELER).

This sequence belongs to the krueppel C2H2-type zinc-finger protein family. In terms of tissue distribution, broadly expressed, except in brain.

The protein resides in the nucleus. Transcription factor that binds specifically to the RAS-responsive elements (RRE) of gene promoters. The sequence is that of Ras-responsive element-binding protein 1 (RREB1) from Gallus gallus (Chicken).